The primary structure comprises 714 residues: MSWVRSVAIRTALCRQVRSRYQSYGSTRLFSSSLRSWEEPEVVTKTPKADIDHEAVKAHQESSPLKSIEVPFTSLEASRKFDKSIFRGLYNSKMKNMTVVQQRAIMPMMDTKTGVVVRAKTGTGKTLAFALPCIQAALENPQQTQKGRIQALVVAPTRDLALQIEAEFKKVLQHQTRNVHRKTDTFVLIGGRKNDLHPKAKAAIVIATPGRLEAILRDPRMLPMFSDLKYRVYDEADRLLDQGFAPTLEVIEERLRDAKAEALEPDNHFKTALFSATVDDAVTNFAHETIGKEYEYINCVDKDAEESHENIHQGIVRTQSIKDSFEASFSYILNHINDKYFKAIVFLPTITGTEYYYRVLQRAKREELYDSETATKKYGSRILRLHGKMSQSARDRTVKEFRRTSHGVLVCTDVAARGLDFNDVSHVIQMCPSSSVADYIHKIGRTARAGARGKARIFISEPEMKFIETLQRERGIVFKEDTEYVKDETSPDHFQRLGSYEQDALEEFLRTFLGFAASVSGVYRFNKQRIVEESFALYRHILNDPSAKLSVGRRFVSEVLRMPGRDAAEFFDVPGGFDMRSSNDRKSKRTFMGDGGSRSDRGFSNDRYGNSGRSYNKSRSFDRNDRSYGNDRSYSNDRKSYGNKSYGDKSYGNKAYGDKSYGDKSYGDKSYGKSYGNRSNDRSFSRGNDRGGYEKRNYGSQSRNTYGRRDDSDE.

A mitochondrion-targeting transit peptide spans 1–37 (MSWVRSVAIRTALCRQVRSRYQSYGSTRLFSSSLRSW). A Q motif motif is present at residues 74 to 102 (SLEASRKFDKSIFRGLYNSKMKNMTVVQQ). A Helicase ATP-binding domain is found at 106–296 (MPMMDTKTGV…HETIGKEYEY (191 aa)). Residue 119-126 (AKTGTGKT) participates in ATP binding. The short motif at 234-237 (DEAD) is the DEAD box element. Residues 335–498 (HINDKYFKAI…TSPDHFQRLG (164 aa)) form the Helicase C-terminal domain. The interval 581-714 (SSNDRKSKRT…TYGRRDDSDE (134 aa)) is disordered. Basic and acidic residues-rich tracts occupy residues 619 to 640 (RSFD…DRKS), 656 to 671 (YGDK…DKSY), and 679 to 697 (SNDR…EKRN).

Belongs to the DEAD box helicase family. DDX18/HAS1 subfamily.

The protein resides in the mitochondrion matrix. The enzyme catalyses ATP + H2O = ADP + phosphate + H(+). Functionally, ATP-dependent RNA helicase required for mitochondrial splicing of group I and II introns. Also required for efficient mitochondrial translation. In Meyerozyma guilliermondii (strain ATCC 6260 / CBS 566 / DSM 6381 / JCM 1539 / NBRC 10279 / NRRL Y-324) (Yeast), this protein is ATP-dependent RNA helicase MSS116, mitochondrial (MSS116).